The chain runs to 543 residues: CTP synthase (543 aa).

The tract at residues 1-265 is amidoligase domain; the sequence is MARYIFITGG…DDEVLAAFAI (265 aa). Residue serine 13 participates in CTP binding. Position 13 (serine 13) interacts with UTP. 14–19 contacts ATP; it reads SLGKGL. An L-glutamine-binding site is contributed by tyrosine 54. An ATP-binding site is contributed by aspartate 71. Residues aspartate 71 and glutamate 139 each contribute to the Mg(2+) site. CTP-binding positions include 146–148, 186–191, and lysine 222; these read DIE and KTKPTQ. Residues 186–191 and lysine 222 each bind UTP; that span reads KTKPTQ. Residue 238–240 coordinates ATP; sequence RDA. The Glutamine amidotransferase type-1 domain occupies 291 to 542; sequence TIAIVGKYTG…IEAALVRSRL (252 aa). Position 353 (glycine 353) interacts with L-glutamine. The active-site Nucleophile; for glutamine hydrolysis is the cysteine 380. Residues 381 to 384, glutamate 404, and arginine 470 contribute to the L-glutamine site; that span reads FGMQ. Residues histidine 515 and glutamate 517 contribute to the active site.

This sequence belongs to the CTP synthase family. As to quaternary structure, homotetramer.

It catalyses the reaction UTP + L-glutamine + ATP + H2O = CTP + L-glutamate + ADP + phosphate + 2 H(+). The catalysed reaction is L-glutamine + H2O = L-glutamate + NH4(+). The enzyme catalyses UTP + NH4(+) + ATP = CTP + ADP + phosphate + 2 H(+). It participates in pyrimidine metabolism; CTP biosynthesis via de novo pathway; CTP from UDP: step 2/2. Its activity is regulated as follows. Allosterically activated by GTP, when glutamine is the substrate; GTP has no effect on the reaction when ammonia is the substrate. The allosteric effector GTP functions by stabilizing the protein conformation that binds the tetrahedral intermediate(s) formed during glutamine hydrolysis. Inhibited by the product CTP, via allosteric rather than competitive inhibition. Catalyzes the ATP-dependent amination of UTP to CTP with either L-glutamine or ammonia as the source of nitrogen. Regulates intracellular CTP levels through interactions with the four ribonucleotide triphosphates. This Rhodopseudomonas palustris (strain HaA2) protein is CTP synthase.